The sequence spans 760 residues: DNA replication licensing factor mcm7 (760 aa).

The MCM domain maps to Val-353 to Val-559. ATP-binding residues include Tyr-366, Gly-406, Ala-408, Lys-409, Ser-410, Asn-511, Arg-536, and Arg-630. An Arginine finger motif is present at residues Ser-535–Asp-538.

It belongs to the MCM family. In terms of assembly, component of the mcm2-7 complex. The complex forms a toroidal hexameric ring with the proposed subunit order mcm2-mcm6-mcm4-mcm7-mcm3-mcm5. The heterodimers of mcm4/mcm6 and mcm3/mcm5 interact with mcm2 and mcm7. Interacts with sld3 and mcm10.

The protein localises to the nucleus. It carries out the reaction ATP + H2O = ADP + phosphate + H(+). Acts as a component of the MCM2-7 complex (MCM complex) which is the replicative helicase essential for 'once per cell cycle' DNA replication initiation and elongation in eukaryotic cells. Core component of CDC45-MCM-GINS (CMG) helicase, the molecular machine that unwinds template DNA during replication, and around which the replisome is built. The active ATPase sites in the MCM2-7 ring are formed through the interaction surfaces of two neighboring subunits such that a critical structure of a conserved arginine finger motif is provided in trans relative to the ATP-binding site of the Walker A box of the adjacent subunit. The six ATPase active sites, however, are likely to contribute differentially to the complex helicase activity. Required for the progression of S phase. This chain is DNA replication licensing factor mcm7 (mcm7), found in Schizosaccharomyces pombe (strain 972 / ATCC 24843) (Fission yeast).